Here is a 230-residue protein sequence, read N- to C-terminus: Large ribosomal subunit protein uL1c (230 aa).

This sequence belongs to the universal ribosomal protein uL1 family. As to quaternary structure, part of the 50S ribosomal subunit.

It localises to the plastid. Its subcellular location is the chloroplast. Functionally, binds directly to 23S rRNA. Might be involved in E site tRNA release (Potential). This chain is Large ribosomal subunit protein uL1c (rpl1), found in Phaeodactylum tricornutum (strain CCAP 1055/1).